The following is a 229-amino-acid chain: Clathrin light chain B (229 aa).

2 stretches are compositionally biased toward low complexity: residues 1-17 and 45-58; these read MAEDFGFFSSSESGAPE and GAPAASQVASAQPG. Positions 1–80 are disordered; the sequence is MAEDFGFFSS…TVNGDVFQEA (80 aa). Phosphoserine occurs at positions 11 and 13. The tract at residues 93–155 is involved in binding clathrin heavy chain; that stretch reads ADRLTQEPES…QVEKNKINNR (63 aa). Threonine 187 is subject to Phosphothreonine. Cysteine 199 and cysteine 209 are oxidised to a cystine. Lysine 204 is subject to N6-acetyllysine. Residue serine 217 is modified to Phosphoserine.

This sequence belongs to the clathrin light chain family. As to quaternary structure, clathrin coats are formed from molecules containing 3 heavy chains and 3 light chains. Interacts (via N-terminus) with HIP1. Interacts with HIP1R.

It localises to the cytoplasmic vesicle membrane. The protein resides in the membrane. It is found in the coated pit. In terms of biological role, clathrin is the major protein of the polyhedral coat of coated pits and vesicles. The sequence is that of Clathrin light chain B (Cltb) from Rattus norvegicus (Rat).